Reading from the N-terminus, the 285-residue chain is Putative sugar uptake protein lp_2503 (285 aa).

A run of 9 helical transmembrane segments spans residues 2-21, 31-48, 55-72, 112-134, 147-169, 179-196, 209-228, 233-255, and 264-283; these read GILI…LISG, TLGM…LWAV, SKIW…SIGQ, GNMY…LTSL, NWGV…TIVV, VVMP…IWSF, NIVT…MAMA, AVAY…YLLG, and VYVV…LSLM.

This sequence belongs to the GRP transporter (TC 2.A.7.5) family.

It is found in the cell membrane. The polypeptide is Putative sugar uptake protein lp_2503 (Lactiplantibacillus plantarum (strain ATCC BAA-793 / NCIMB 8826 / WCFS1) (Lactobacillus plantarum)).